The sequence spans 342 residues: Nucleoid-associated protein Shewmr7_2293 (342 aa).

This sequence belongs to the YejK family.

It localises to the cytoplasm. It is found in the nucleoid. This Shewanella sp. (strain MR-7) protein is Nucleoid-associated protein Shewmr7_2293.